The following is a 310-amino-acid chain: tRNA-cytidine(32) 2-sulfurtransferase (310 aa).

Positions 45-50 (SGGKDS) match the PP-loop motif motif. Residues cysteine 120, cysteine 123, and cysteine 211 each coordinate [4Fe-4S] cluster.

This sequence belongs to the TtcA family. As to quaternary structure, homodimer. Mg(2+) is required as a cofactor. [4Fe-4S] cluster serves as cofactor.

The protein localises to the cytoplasm. The enzyme catalyses cytidine(32) in tRNA + S-sulfanyl-L-cysteinyl-[cysteine desulfurase] + AH2 + ATP = 2-thiocytidine(32) in tRNA + L-cysteinyl-[cysteine desulfurase] + A + AMP + diphosphate + H(+). The protein operates within tRNA modification. Functionally, catalyzes the ATP-dependent 2-thiolation of cytidine in position 32 of tRNA, to form 2-thiocytidine (s(2)C32). The sulfur atoms are provided by the cysteine/cysteine desulfurase (IscS) system. The sequence is that of tRNA-cytidine(32) 2-sulfurtransferase from Shewanella baltica (strain OS155 / ATCC BAA-1091).